Reading from the N-terminus, the 880-residue chain is DNA-directed RNA polymerase subunit beta C-terminal section (880 aa).

Belongs to the RNA polymerase beta chain family. As to quaternary structure, in plastids the minimal PEP RNA polymerase catalytic core is composed of four subunits: alpha, beta, beta', and beta''. When a (nuclear-encoded) sigma factor is associated with the core the holoenzyme is formed, which can initiate transcription.

The protein resides in the plastid. Its subcellular location is the chloroplast. The enzyme catalyses RNA(n) + a ribonucleoside 5'-triphosphate = RNA(n+1) + diphosphate. Functionally, DNA-dependent RNA polymerase catalyzes the transcription of DNA into RNA using the four ribonucleoside triphosphates as substrates. This Pleurastrum terricola (Filamentous green alga) protein is DNA-directed RNA polymerase subunit beta C-terminal section (rpoB2).